The sequence spans 167 residues: Cell number regulator 3 (167 aa).

Residues 67–84 (GMTSCGTSAALFALIQWL) form a helical membrane-spanning segment.

Belongs to the cornifelin family. In terms of tissue distribution, expressed only in pollen.

The protein resides in the membrane. The chain is Cell number regulator 3 (CNR3) from Zea mays (Maize).